The following is a 148-amino-acid chain: Transcription antitermination protein NusB (148 aa).

Belongs to the NusB family.

Functionally, involved in transcription antitermination. Required for transcription of ribosomal RNA (rRNA) genes. Binds specifically to the boxA antiterminator sequence of the ribosomal RNA (rrn) operons. This is Transcription antitermination protein NusB from Novosphingobium aromaticivorans (strain ATCC 700278 / DSM 12444 / CCUG 56034 / CIP 105152 / NBRC 16084 / F199).